The following is a 638-amino-acid chain: MKRRNFIQLSSLATIGMSLPSAGIVNACSSFPEQSLEFKNLTSELLKEWCDGMLKVQINNPSNLEEHGALRCPSCSHIHGRCMDAVYPFLYMADVSGDEKYIEAAKLVMIWAENNVSQENGAWTVIPNPKSWKGITIFGAIALAESLHYHSHILDDKTLKAWTNRLARAGQYIYDTFTIDFTNINYGGTAIYGLDIIGDVLGNGNFKEKSKKMAEEVQAFFTKNDYLLYGECKPEADKLSAKGLHGVDLGYNVEETLNSLVMYALKNDDQALLQIVTKSLNSHLEFMLPDGGWDNSWGNRMYKWTYWGSRTCDGSQPAFAMMAHINPAFGTAAVKNTELLKQCTANGLLHGGPHYISAGIPPCVHHTFTHAKPLAALLDHWKHLPEINKTTALPRVTANGIKHFKDLDVLLFSRGDWRGTVSAYDAEYHYKKDYRQATGGSLGILYHNKVGLLCAASMAVYNMVEPYNQQPQPGKDIALTPRIETFKEDQWYTNLYDLTANLEAIDTKEVINLASVVKLKNESRKMVSGTASEFHLTYSCAKEGLTIKVSTQQDILEPTAFVLPIASPEKEKVEFVNEHEIKISKPGGVVTIKANVPLKLKEYSGTRTFNMVPGLEALPIELFFETHIKELVLIVSVV.

An N-terminal signal peptide occupies residues 1-27 (MKRRNFIQLSSLATIGMSLPSAGIVNA).

It belongs to the polysaccharide lyase 37 family.

Its subcellular location is the periplasm. It catalyses the reaction Endolytic cleavage of (1-&gt;4)-beta-galactosaminic bonds between N-acetylgalactosamine and either D-glucuronic acid or L-iduronic acid to produce a mixture of Delta(4)-unsaturated oligosaccharides of different sizes that are ultimately degraded to Delta(4)-unsaturated tetra- and disaccharides.. The enzyme catalyses Elimination of sulfate, appears to act on linkages between N-acetyl-D-glucosamine and uronate. Product is an unsaturated sugar.. Its function is as follows. Broad-specificity lyase involved in ulvan degradation. Ulvan is the main polysaccharide component of the Ulvales (green seaweed) cell wall. It is composed of disaccharide building blocks comprising 3-sulfated rhamnose (Rha3S) linked to D-glucuronic acid (GlcA), L-iduronic acid (IduA), or D-xylose (Xyl). Ulvan lyase catalyzes the endolytic cleavage of the glycosidic bond between Rha3S and the uronic acids GlcA or IduA, producing oligosaccharides that have unsaturated 4-deoxy-L-threo-hex-4-enopyranosiduronic acid (deltaUA) at the non-reducing end. This results eventually in the degradation of the ulvan polysaccharide into deltaUA-Rha3S disaccharides and deltaUA-Rha3S-Xyl-Rha3S tetrasaccharides. It is also able to degrade the glycosaminoglycans heparan sulfate and chondroitin sulfate. Not active against pectin, xanthan or alginate. This Formosa agariphila (strain DSM 15362 / KCTC 12365 / LMG 23005 / KMM 3901 / M-2Alg 35-1) protein is Broad-specificity ulvan lyase.